The sequence spans 197 residues: MKTKNRPPRRRTPMQDAEATPGEQTPDRSQSGSGASEVTKGLRSRTARASGTRAEVSRRRQGSSSRRENSVQRRLESNERERQRMHKLNNAFQALREVIPHVRADKKLSKIETLTLAKNYIKSLTATILTMSSSRLPGLEAPGPAPGPKLYQHYHHQQQQQQQQQQVAGAVLGVTEDQPQGHLQRYSTQIHSFREGS.

Positions 1 to 12 are enriched in basic residues; it reads MKTKNRPPRRRT. 2 disordered regions span residues 1-82 and 175-197; these read MKTK…ERER and TEDQ…REGS. Residues Thr-12 and Thr-25 each carry the phosphothreonine modification. Polar residues predominate over residues 27-36; sequence DRSQSGSGAS. The segment covering 65–82 has biased composition (basic and acidic residues); that stretch reads SRRENSVQRRLESNERER. Positions 72-124 constitute a bHLH domain; it reads QRRLESNERERQRMHKLNNAFQALREVIPHVRADKKLSKIETLTLAKNYIKSL.

As to quaternary structure, forms homodimers or heterodimers with TCF3 gene products E12 and E47. These dimers bind to the E-box site, however, heterodimer with MYOD1 does not bind target DNA. In terms of tissue distribution, expressed in liver, spleen and olfactory epithelium. Weaker expression is seen in skeletal muscle, cardiac muscle, eye and brain tissue.

The protein localises to the nucleus. Its function is as follows. Plays a role in controlling the transcriptional activity of MyoD, ensuring that expanding myoblast populations remain undifferentiated. Repression may occur through muscle-specific E-box occupancy by homodimers. May also negatively regulate bHLH-mediated transcription through an N-terminal repressor domain. Serves as a key regulator of acinar cell function, stability, and identity. Also required for normal organelle localization in exocrine cells and for mitochondrial calcium ion transport. May function as a unique regulator of gene expression in several different embryonic and postnatal cell lineages. Binds to the E-box consensus sequence 5'-CANNTG-3'. In Rattus norvegicus (Rat), this protein is Class A basic helix-loop-helix protein 15 (Bhlha15).